The chain runs to 565 residues: Anaphase-promoting complex subunit 7 (565 aa).

10 TPR repeats span residues 101–134 (EIEV…RQRT), 169–202 (LDAI…LDWL), 203–236 (SVWI…LRDN), 237–270 (VDLL…DPYL), 339–372 (VQAL…APCR), 373–406 (LDCY…LGAN), 407–441 (AQTL…RPDY), 442–474 (IKAV…NQSD), 475–508 (CVLH…DPND), and 509–531 (QKSL…TQEE). At Lys229 the chain carries N6-acetyllysine. Over residues 513–523 (EGMQKMEKEES) the composition is skewed to basic and acidic residues. The interval 513-565 (EGMQKMEKEESPTDATQEEDVDDMEGSGEEGDLEGSDSEAAQWADQEQWFGMQ) is disordered. Residues 528–549 (TQEEDVDDMEGSGEEGDLEGSD) show a composition bias toward acidic residues.

This sequence belongs to the APC7 family. V-shaped homodimer. The mammalian APC/C is composed at least of 14 distinct subunits ANAPC1, ANAPC2, CDC27/APC3, ANAPC4, ANAPC5, CDC16/APC6, ANAPC7, CDC23/APC8, ANAPC10, ANAPC11, CDC26/APC12, ANAPC13, ANAPC15 and ANAPC16 that assemble into a complex of at least 19 chains with a combined molecular mass of around 1.2 MDa; APC/C interacts with FZR1 and FBXO5.

The protein localises to the cytoplasm. It localises to the cytoskeleton. It is found in the nucleus. Its subcellular location is the spindle. It functions in the pathway protein modification; protein ubiquitination. In terms of biological role, component of the anaphase promoting complex/cyclosome (APC/C), a cell cycle-regulated E3 ubiquitin ligase that controls progression through mitosis and the G1 phase of the cell cycle. The APC/C complex acts by mediating ubiquitination and subsequent degradation of target proteins: it mainly mediates the formation of 'Lys-11'-linked polyubiquitin chains and, to a lower extent, the formation of 'Lys-48'- and 'Lys-63'-linked polyubiquitin chains. The APC/C complex catalyzes assembly of branched 'Lys-11'-/'Lys-48'-linked branched ubiquitin chains on target proteins. APC7 is not required for the assembly of the APC/C complex, but has an enzyme-substrate adapter activity mediating the processive ubiquitination of specific substrates. Involved in brain development through the specific ubiquitination and clearance of MKI67 from constitutive heterochromatin after neuronal progenitors exit mitosis. The sequence is that of Anaphase-promoting complex subunit 7 from Homo sapiens (Human).